The chain runs to 414 residues: Histidine--tRNA ligase (414 aa).

It belongs to the class-II aminoacyl-tRNA synthetase family. Homodimer.

Its subcellular location is the cytoplasm. The enzyme catalyses tRNA(His) + L-histidine + ATP = L-histidyl-tRNA(His) + AMP + diphosphate + H(+). This Anaeromyxobacter sp. (strain K) protein is Histidine--tRNA ligase.